Here is a 634-residue protein sequence, read N- to C-terminus: MAELNPLAEELSCSVCLELFKEPVTTPCGHNFCMSCLDETWVVQGPPYRCPQCRKVYQVRPQLQKNTVMCAVVEQFLQAEQARTPVDDWTPPARFSASSAATQVACDHCLTEIAVKTCLVCMASFCQEHLRPHFDSPAFQDHPLQSPIRDLLRRKCTQHNRLRELFCPEHGECICHICLVEHKTCSPTTLSQASADLEYKLRNKLTIMHSHINGATKALEDVRSKQQCVQDSMKRKMEQLRQEYMEMKAVIDAAETSSLRKLKEEEKRVYGKFDTIYQVLVKKKSEMQKLKAEVELIMDKGDEFEFLEKAAKLQGESTKPVYIPKIDLDHDLIMGIYQGAADLKSELKHSIKKLQKKSEEHNGSGNKGDQTQSTFKPVQPSKKTIQEKKTKKTPVAPGPPSHFSPNKLPTFGAPGQSLDSKATSPDAAPKASAAQPDSVGVKAKVLENFLTKSRTELLEYFVKVIFDYNTAHNKVSLSNKYTTASVSDGLQHYRSHPQRFTYCSQVLGLHCYKNGIHYWEVELQKNNFCGVGICYGSMERQGPESRLGRNPNSWCVEWFNNKISAWHNNVEKTLPSTKATRVGVLLNCDHGFVIFFAVTEKVHLMYKFKVDFTEALYPAFWVFSAGTTLSICSK.

An RING-type zinc finger spans residues Cys13–Arg54. Thr90 bears the Phosphothreonine mark. Ser99 carries the phosphoserine modification. Lys116 is covalently cross-linked (Glycyl lysine isopeptide (Lys-Gly) (interchain with G-Cter in ISG15)). Residues Ala215 to Glu305 adopt a coiled-coil conformation. Position 272 is an N6-acetyllysine (Lys272). At Tyr277 the chain carries Phosphotyrosine. Positions Lys353–Asp437 are disordered. Over residues Gly363–Lys376 the composition is skewed to polar residues. The B30.2/SPRY domain maps to Lys444–Lys634. Lys572 carries the N6-acetyllysine modification.

Forms homodimers. Interacts (via SPRY domain) with RIGI (via CARD domain). Interacts with ZFHX3. Interacts with NLRP12; this interaction reduces the E3 ubiquitin ligase TRIM25-mediated 'Lys-63'-linked RIGI activation. Interacts with the KHDC3L/FILIA-OOEP/FLOPED scaffold complex and BLM at DNA replication forks. Interacts with RTN3; this interaction prevents RIGI ubiquitination. Interacts with YWHAE. Auto-ISGylated. As to expression, ubiquitous.

It localises to the cytoplasm. The protein resides in the stress granule. The protein localises to the nucleus. The enzyme catalyses S-ubiquitinyl-[E2 ubiquitin-conjugating enzyme]-L-cysteine + [acceptor protein]-L-lysine = [E2 ubiquitin-conjugating enzyme]-L-cysteine + N(6)-ubiquitinyl-[acceptor protein]-L-lysine.. It catalyses the reaction ATP + [ISG15] + [protein]-lysine = AMP + diphosphate + [protein]-N-ISGyllysine.. Its pathway is protein modification; protein ubiquitination. In terms of biological role, functions as a ubiquitin E3 ligase and as an ISG15 E3 ligase. Involved in innate immune defense against viruses by mediating ubiquitination of RIGI and IFIH1. Mediates 'Lys-63'-linked polyubiquitination of the RIGI N-terminal CARD-like region and may play a role in signal transduction that leads to the production of interferons in response to viral infection. Mediates 'Lys-63'-linked polyubiquitination of IFIH1. Promotes ISGylation of 14-3-3 sigma (SFN), an adapter protein implicated in the regulation of a large spectrum signaling pathway. Mediates estrogen action in various target organs. Mediates the ubiquitination and subsequent proteasomal degradation of ZFHX3. Plays a role in promoting the restart of stalled replication forks via interaction with the KHDC3L-OOEP scaffold and subsequent ubiquitination of BLM, resulting in the recruitment and retainment of BLM at DNA replication forks. Plays an essential role in the antiviral activity of ZAP/ZC3HAV1; an antiviral protein which inhibits the replication of certain viruses. Mechanistically, mediates 'Lys-63'-linked polyubiquitination of ZAP/ZC3HAV1 that is required for its optimal binding to target mRNA. Also mediates the ubiquitination of various substrates implicated in stress granule formation, nonsense-mediated mRNA decay, nucleoside synthesis and mRNA translation and stability. The polypeptide is E3 ubiquitin/ISG15 ligase TRIM25 (Trim25) (Mus musculus (Mouse)).